A 106-amino-acid polypeptide reads, in one-letter code: Iron-sulfur cluster assembly protein CyaY (106 aa).

The protein belongs to the frataxin family.

In terms of biological role, involved in iron-sulfur (Fe-S) cluster assembly. May act as a regulator of Fe-S biogenesis. This Serratia proteamaculans (strain 568) protein is Iron-sulfur cluster assembly protein CyaY.